The sequence spans 363 residues: Dual-specificity RNA methyltransferase RlmN (363 aa).

Glu-102 acts as the Proton acceptor in catalysis. One can recognise a Radical SAM core domain in the interval 108-349; it reads EKKRATLCVS…KNRGQDIGAA (242 aa). Cys-115 and Cys-350 are disulfide-bonded. The [4Fe-4S] cluster site is built by Cys-122, Cys-126, and Cys-129. S-adenosyl-L-methionine-binding positions include 174-175, Ser-206, 228-230, and Asn-307; these read GE and SLH. Cys-350 functions as the S-methylcysteine intermediate in the catalytic mechanism.

It belongs to the radical SAM superfamily. RlmN family. It depends on [4Fe-4S] cluster as a cofactor.

It is found in the cytoplasm. The catalysed reaction is adenosine(2503) in 23S rRNA + 2 reduced [2Fe-2S]-[ferredoxin] + 2 S-adenosyl-L-methionine = 2-methyladenosine(2503) in 23S rRNA + 5'-deoxyadenosine + L-methionine + 2 oxidized [2Fe-2S]-[ferredoxin] + S-adenosyl-L-homocysteine. It catalyses the reaction adenosine(37) in tRNA + 2 reduced [2Fe-2S]-[ferredoxin] + 2 S-adenosyl-L-methionine = 2-methyladenosine(37) in tRNA + 5'-deoxyadenosine + L-methionine + 2 oxidized [2Fe-2S]-[ferredoxin] + S-adenosyl-L-homocysteine. In terms of biological role, specifically methylates position 2 of adenine 2503 in 23S rRNA and position 2 of adenine 37 in tRNAs. m2A2503 modification seems to play a crucial role in the proofreading step occurring at the peptidyl transferase center and thus would serve to optimize ribosomal fidelity. The chain is Dual-specificity RNA methyltransferase RlmN from Buchnera aphidicola subsp. Schizaphis graminum (strain Sg).